The primary structure comprises 256 residues: Imidazole glycerol phosphate synthase subunit HisF (256 aa).

Catalysis depends on residues Asp-11 and Asp-130.

This sequence belongs to the HisA/HisF family. As to quaternary structure, heterodimer of HisH and HisF.

The protein resides in the cytoplasm. The catalysed reaction is 5-[(5-phospho-1-deoxy-D-ribulos-1-ylimino)methylamino]-1-(5-phospho-beta-D-ribosyl)imidazole-4-carboxamide + L-glutamine = D-erythro-1-(imidazol-4-yl)glycerol 3-phosphate + 5-amino-1-(5-phospho-beta-D-ribosyl)imidazole-4-carboxamide + L-glutamate + H(+). It functions in the pathway amino-acid biosynthesis; L-histidine biosynthesis; L-histidine from 5-phospho-alpha-D-ribose 1-diphosphate: step 5/9. Functionally, IGPS catalyzes the conversion of PRFAR and glutamine to IGP, AICAR and glutamate. The HisF subunit catalyzes the cyclization activity that produces IGP and AICAR from PRFAR using the ammonia provided by the HisH subunit. This chain is Imidazole glycerol phosphate synthase subunit HisF, found in Prochlorococcus marinus (strain MIT 9312).